Reading from the N-terminus, the 86-residue chain is Small ribosomal subunit protein uS17 (86 aa).

The protein belongs to the universal ribosomal protein uS17 family. Part of the 30S ribosomal subunit.

In terms of biological role, one of the primary rRNA binding proteins, it binds specifically to the 5'-end of 16S ribosomal RNA. The chain is Small ribosomal subunit protein uS17 from Marinomonas sp. (strain MWYL1).